We begin with the raw amino-acid sequence, 301 residues long: Coiled-coil domain-containing protein 69-B (301 aa).

The tract at residues 1-43 (MGSKTSKMCCPQLRKKKRQKAHKEGPSSQELNDLNAKSQGPNE) is disordered. Gly2 is lipidated: N-myristoyl glycine. The span at 26–41 (PSSQELNDLNAKSQGP) shows a compositional bias: polar residues. Coiled-coil stretches lie at residues 42–167 (NELL…SILS) and 213–281 (KSTM…NLYR).

The protein belongs to the CCDC69 family.

It is found in the cytoplasm. It localises to the cytoskeleton. The protein resides in the spindle. The protein localises to the midbody. May act as a scaffold to regulate the recruitment and assembly of spindle midzone components. This is Coiled-coil domain-containing protein 69-B (ccdc69-b) from Xenopus laevis (African clawed frog).